The chain runs to 178 residues: Large ribosomal subunit protein uL6 (178 aa).

This sequence belongs to the universal ribosomal protein uL6 family. In terms of assembly, part of the 50S ribosomal subunit.

Its function is as follows. This protein binds to the 23S rRNA, and is important in its secondary structure. It is located near the subunit interface in the base of the L7/L12 stalk, and near the tRNA binding site of the peptidyltransferase center. This is Large ribosomal subunit protein uL6 from Campylobacter concisus (strain 13826).